Consider the following 264-residue polypeptide: tRNA (guanine-N(1)-)-methyltransferase (264 aa).

S-adenosyl-L-methionine is bound by residues Gly-116 and 136-141 (VGDFVL).

This sequence belongs to the RNA methyltransferase TrmD family. As to quaternary structure, homodimer.

Its subcellular location is the cytoplasm. It carries out the reaction guanosine(37) in tRNA + S-adenosyl-L-methionine = N(1)-methylguanosine(37) in tRNA + S-adenosyl-L-homocysteine + H(+). Its function is as follows. Specifically methylates guanosine-37 in various tRNAs. In Koribacter versatilis (strain Ellin345), this protein is tRNA (guanine-N(1)-)-methyltransferase.